Consider the following 414-residue polypeptide: Ribulose bisphosphate carboxylase large chain (414 aa).

The substrate site is built by asparagine 101 and threonine 151. Lysine 153 functions as the Proton acceptor in the catalytic mechanism. Substrate is bound at residue lysine 155. Mg(2+) is bound by residues lysine 179, aspartate 181, and glutamate 182. Lysine 179 carries the N6-carboxylysine modification. Catalysis depends on histidine 272, which acts as the Proton acceptor. Positions 273, 305, and 357 each coordinate substrate.

Belongs to the RuBisCO large chain family. Type I subfamily. Heterohexadecamer of 8 large chains and 8 small chains; disulfide-linked. The disulfide link is formed within the large subunit homodimers. Requires Mg(2+) as cofactor. In terms of processing, the disulfide bond which can form in the large chain dimeric partners within the hexadecamer appears to be associated with oxidative stress and protein turnover.

It localises to the plastid. It is found in the chloroplast. It carries out the reaction 2 (2R)-3-phosphoglycerate + 2 H(+) = D-ribulose 1,5-bisphosphate + CO2 + H2O. The enzyme catalyses D-ribulose 1,5-bisphosphate + O2 = 2-phosphoglycolate + (2R)-3-phosphoglycerate + 2 H(+). In terms of biological role, ruBisCO catalyzes two reactions: the carboxylation of D-ribulose 1,5-bisphosphate, the primary event in carbon dioxide fixation, as well as the oxidative fragmentation of the pentose substrate in the photorespiration process. Both reactions occur simultaneously and in competition at the same active site. This Onychium japonicum (Japanese claw fern) protein is Ribulose bisphosphate carboxylase large chain (rbcL).